The primary structure comprises 634 residues: Calcium up-regulated protein D (634 aa).

The disordered stretch occupies residues 1–23 (MINIEDISKSSNQSEEKQLKSTS). Ricin B-type lectin domains are found at residues 27-146 (KPKY…WTTF) and 117-250 (PGNG…WGIN).

The protein belongs to the cup family.

Its subcellular location is the cytoplasm. It localises to the membrane. May play an important role in stabilizing and/or regulating the cell membrane during Ca(2+) stress or certain stages of development. The protein is Calcium up-regulated protein D (cupD) of Dictyostelium discoideum (Social amoeba).